The primary structure comprises 329 residues: Aspartate--ammonia ligase (329 aa).

The protein belongs to the class-II aminoacyl-tRNA synthetase family. AsnA subfamily.

It is found in the cytoplasm. It carries out the reaction L-aspartate + NH4(+) + ATP = L-asparagine + AMP + diphosphate + H(+). It participates in amino-acid biosynthesis; L-asparagine biosynthesis; L-asparagine from L-aspartate (ammonia route): step 1/1. The sequence is that of Aspartate--ammonia ligase from Ureaplasma urealyticum serovar 10 (strain ATCC 33699 / Western).